Here is a 402-residue protein sequence, read N- to C-terminus: Phosphoglycerate kinase (402 aa).

Substrate is bound by residues 24–26, R40, 63–66, R122, and R155; these read DFN and HFGR. Residues K206, G297, E328, and 357–360 each bind ATP; that span reads GGDS.

Belongs to the phosphoglycerate kinase family. As to quaternary structure, monomer.

The protein localises to the cytoplasm. It carries out the reaction (2R)-3-phosphoglycerate + ATP = (2R)-3-phospho-glyceroyl phosphate + ADP. It participates in carbohydrate degradation; glycolysis; pyruvate from D-glyceraldehyde 3-phosphate: step 2/5. This is Phosphoglycerate kinase from Synechococcus elongatus (strain ATCC 33912 / PCC 7942 / FACHB-805) (Anacystis nidulans R2).